The chain runs to 348 residues: Bombesin receptor-activated protein C6orf89 homolog (348 aa).

Residues 1–58 lie on the Cytoplasmic side of the membrane; sequence MDLAANEISIYDKLSETVDLVRQTGHQCGMSEKAIEKFIRQLLEKNEPQRGPPQYPLL. A helical membrane pass occupies residues 59–79; the sequence is IAVYKVLLTLGLILFTAYFVI. The Extracellular segment spans residues 80–348; sequence QPFSSLAPEP…ICDGTTLSDL (269 aa).

As to quaternary structure, homodimer. Interacts with BRS3. Interacts (via N-terminus) with SIN3B. Glycosylated.

The protein localises to the golgi apparatus membrane. It localises to the cytoplasm. Its function is as follows. Exhibits histone deacetylase (HDAC) enhancer properties. May play a role in cell cycle progression and wound repair of bronchial epithelial cells. The chain is Bombesin receptor-activated protein C6orf89 homolog from Mus musculus (Mouse).